Reading from the N-terminus, the 235-residue chain is Ubiquinone biosynthesis O-methyltransferase (235 aa).

The S-adenosyl-L-methionine site is built by R39, G59, D80, and M124.

This sequence belongs to the methyltransferase superfamily. UbiG/COQ3 family.

It catalyses the reaction a 3-demethylubiquinol + S-adenosyl-L-methionine = a ubiquinol + S-adenosyl-L-homocysteine + H(+). The catalysed reaction is a 3-(all-trans-polyprenyl)benzene-1,2-diol + S-adenosyl-L-methionine = a 2-methoxy-6-(all-trans-polyprenyl)phenol + S-adenosyl-L-homocysteine + H(+). The protein operates within cofactor biosynthesis; ubiquinone biosynthesis. Its function is as follows. O-methyltransferase that catalyzes the 2 O-methylation steps in the ubiquinone biosynthetic pathway. The polypeptide is Ubiquinone biosynthesis O-methyltransferase (Vibrio campbellii (strain ATCC BAA-1116)).